A 592-amino-acid polypeptide reads, in one-letter code: MVLLDSLVGTIVGINGPVIKAEGMSKFKMREMVMVGKKKLIGEIIILENDLATIQVYEETSGLKIGENISSTGMPLSLKLGPGIIGNMFDGIQRPLKKINEISYGFIDEGIGLISIDEEKEWDVNIVVKVGDKLKPGDVYAEVQETNIIKHRIMVPQDVNGEVTKVKESGKYNIEEKIVTVKDGGNIYELNLYQRWPVRTPRPIKNRLSLGKPLITGQRILDMFFPIAKGGTVAIPGGFGTGKTMTQHQLAKWSDADIIVYIGCGERGNEMTEVLEDFPKLIDPKTNTSLMNRTVLIANTSNMPVAAREASIYTGITIAEYYRDMGYDVAIMADSTSRWAEALREISGRLEEMPAEEGYPAYLPSRIAEFYERAGYVENLNDTEGSVTVIGAVSPAGADFSEPVTQNTKRFVGAFLGLDRKLAYARHYPAINWLTSYSQYNVMLTDWYLENISEDIIELRNKMLKILFEENKLQEIVKLVGEDVLPDDQRLILEVARILKVGFLQQNAYHDEDTYVPKEKQYKMLKAIELFYDNAYKCVKMGIPISKIRNEEIFGDLIKMKYNIPNEDISGIKVIEEKISSYYEELIEQYRK.

237 to 244 (GGFGTGKT) contacts ATP.

This sequence belongs to the ATPase alpha/beta chains family.

It carries out the reaction ATP + H2O + 4 H(+)(in) = ADP + phosphate + 5 H(+)(out). Produces ATP from ADP in the presence of a proton gradient across the membrane. The V-type alpha chain is a catalytic subunit. This chain is V-type ATP synthase alpha chain 2, found in Clostridium tetani (strain Massachusetts / E88).